We begin with the raw amino-acid sequence, 324 residues long: 7,8-didemethyl-8-hydroxy-5-deazariboflavin synthase (324 aa).

One can recognise a Radical SAM core domain in the interval 4-239 (VTYSKNVFIP…QEVAIQIPPN (236 aa)). 3 residues coordinate [4Fe-4S] cluster: cysteine 18, cysteine 22, and cysteine 25.

Belongs to the radical SAM superfamily. CofG family. As to quaternary structure, consists of two subunits, CofG and CofH. Requires [4Fe-4S] cluster as cofactor.

It catalyses the reaction 5-amino-5-(4-hydroxybenzyl)-6-(D-ribitylimino)-5,6-dihydrouracil + S-adenosyl-L-methionine = 7,8-didemethyl-8-hydroxy-5-deazariboflavin + 5'-deoxyadenosine + L-methionine + NH4(+) + H(+). It functions in the pathway cofactor biosynthesis; coenzyme F0 biosynthesis. Its function is as follows. Catalyzes the radical-mediated synthesis of 7,8-didemethyl-8-hydroxy-5-deazariboflavin from 5-amino-5-(4-hydroxybenzyl)-6-(D-ribitylimino)-5,6-dihydrouracil. In Archaeoglobus fulgidus (strain ATCC 49558 / DSM 4304 / JCM 9628 / NBRC 100126 / VC-16), this protein is 7,8-didemethyl-8-hydroxy-5-deazariboflavin synthase.